A 671-amino-acid polypeptide reads, in one-letter code: DNA ligase (671 aa).

NAD(+)-binding positions include 35–39 (DQQYD), 84–85 (SL), and E113. The active-site N6-AMP-lysine intermediate is K115. Residues R136, E170, K285, and K309 each contribute to the NAD(+) site. Zn(2+) is bound by residues C403, C406, C421, and C426. A BRCT domain is found at 588-671 (TTQTIFTNKK…QIIENSQIKL (84 aa)).

This sequence belongs to the NAD-dependent DNA ligase family. LigA subfamily. Mg(2+) is required as a cofactor. The cofactor is Mn(2+).

It catalyses the reaction NAD(+) + (deoxyribonucleotide)n-3'-hydroxyl + 5'-phospho-(deoxyribonucleotide)m = (deoxyribonucleotide)n+m + AMP + beta-nicotinamide D-nucleotide.. DNA ligase that catalyzes the formation of phosphodiester linkages between 5'-phosphoryl and 3'-hydroxyl groups in double-stranded DNA using NAD as a coenzyme and as the energy source for the reaction. It is essential for DNA replication and repair of damaged DNA. The polypeptide is DNA ligase (Onion yellows phytoplasma (strain OY-M)).